A 392-amino-acid polypeptide reads, in one-letter code: Speckle-type POZ protein-like (392 aa).

Positions 31-161 (KFSYMWTINN…DDKLTLFCEV (131 aa)) constitute an MATH domain. The BTB domain maps to 200-267 (TDCCFFVRGK…VYTGKAPNLD (68 aa)).

This sequence belongs to the Tdpoz family. As to quaternary structure, homodimer. Heterodimer with SPOP. Component of cullin-RING-based BCR (BTB-CUL3-RBX1) E3 ubiquitin-protein ligase complexes containing homodimeric SPOPL or the heterodimer formed by SPOP and SPOPL. Interacts with CUL3 and MACROH2A1.

It is found in the nucleus. The protein operates within protein modification; protein ubiquitination. Component of a cullin-RING-based BCR (BTB-CUL3-RBX1) E3 ubiquitin-protein ligase complex that mediates the ubiquitination and subsequent proteasomal degradation of target proteins, but with relatively low efficiency. Cullin-RING-based BCR (BTB-CUL3-RBX1) E3 ubiquitin-protein ligase complexes containing homodimeric SPOPL or the heterodimer formed by SPOP and SPOPL are less efficient than ubiquitin ligase complexes containing only SPOP. May function to down-regulate the activity of cullin-RING-based BCR (BTB-CUL3-RBX1) E3 ubiquitin-protein ligase complexes that contain SPOP. The sequence is that of Speckle-type POZ protein-like (Spopl) from Mus musculus (Mouse).